The following is a 692-amino-acid chain: Furin-like protease kpc-1 (692 aa).

A signal peptide spans 1–33 (MSNISWYRHCSVRLQLVTLALFLLLGSASLGSA). N-linked (GlcNAc...) asparagine glycosylation is present at Asn-3. Positions 34 to 139 (HIDEEFEDDV…QQVAKRRVKR (106 aa)) are excised as a propeptide. Residues 140-670 (GYRRIRRHTD…RSVQMEATSS (531 aa)) lie on the Lumenal side of the membrane. Residues 152-177 (DIFEEDDDGTQISKSRNRKHPDPNDP) are disordered. Asp-176 provides a ligand contact to Ca(2+). In terms of domain architecture, Peptidase S8 spans 182 to 503 (MWYLNRGEHH…YGLMDAGAMV (322 aa)). Asp-221 serves as the catalytic Charge relay system. Asp-222 contacts substrate. Residues Asp-230, Asp-242, Asp-247, and Asp-249 each coordinate Ca(2+). The segment at 230–249 (DISPNYDERASYDVNDRDND) is disordered. 259–260 (EN) contacts substrate. The active-site Charge relay system is the His-262. Ile-273 is a binding site for Ca(2+). An N-linked (GlcNAc...) asparagine glycan is attached at Asn-275. The Ca(2+) site is built by Asn-276, Leu-278, and Ile-280. 2 disulfides stabilise this stretch: Cys-279-Cys-428 and Cys-371-Cys-401. Substrate contacts are provided by residues Glu-304, 321–326 (SWGPDD), Asp-332, and 360–363 (ASGN). Ca(2+) is bound at residue Asp-326. Asp-369 is a Ca(2+) binding site. Substrate is bound by residues Asp-374 and Tyr-376. Glu-399 lines the Ca(2+) pocket. Ser-436 (charge relay system) is an active-site residue. A substrate-binding site is contributed by Ser-436. 2 N-linked (GlcNAc...) asparagine glycosylation sites follow: Asn-455 and Asn-487. One can recognise a P/Homo B domain in the interval 512-646 (VDEQHRCRQF…ELVLYGTDRE (135 aa)). Cysteines 518 and 544 form a disulfide. Residues 570 to 572 (RGD) carry the Cell attachment site motif. Residues 671 to 692 (GTQYSIFHVITLVILTFSQILY) traverse the membrane as a helical segment.

Belongs to the peptidase S8 family. Furin subfamily. As to quaternary structure, interacts (via extracellular domain) with receptor dma-1 (via extracellular domain); the interaction promotes dma-1 internalization. The cofactor is Ca(2+). As to expression, expressed in the nervous system including the ventral nerve cord, the nerve ring and the retrovesicular ganglion, and in epithelial cells. Expressed in IL2 neurons. Expressed in PVD mechanosensory neurons. Expressed in pharynx with strong expression in the g2 pharyngeal gland cells and vpi pharyngeal intestinal valve cells. Expressed in intestine.

It localises to the cell membrane. The protein localises to the perikaryon. It is found in the cell projection. Its subcellular location is the axon. Functionally, furin-like protease which cleaves proproteins at the RX(K/R)R consensus motif. During neuronal development, regulates the formation and extension of dendrite branches and cellular positioning of various type of neurons. Together with chin-1 and cdc-42, plays a role in the development of the neuropil and is required for the guidance of axons from neurons, including SubL pioneer neurons and AIY interneurons, into the nerve ring. Its role in axon guidance in glia and pioneer neurons may be through ensuring the fmi-1 protein is correctly localized to the nerve ring. Promotes the formation, extension and self-avoidance of dendritic branches of PVD and FLP mechanosensory neurons. In PVD neurons, regulates plasma membrane levels of branching receptor dma-1 by targeting it to late endosomes and thus promotes normal dendrite branching and dendrite self-avoidance. Also controls dendrite extension in AIY and D-type motoneurons, dendrite branching in AQR sensory neurons and VC4/5 motoneurons, the normal number of dendritic branches in AVL neurons and the positioning of HSN and ALM/PLM neurons. Dispensable for maintaining dendrite branching in adults. Also regulates dauer-specific dendritic branching of IL2 neurons and dauer-specific nictation behavior. Under adverse environmental conditions, may promote dauer formation by processing insulin-like proteins ins-1 and ins-18, two daf-2/InsR antagonists. This is Furin-like protease kpc-1 from Caenorhabditis elegans.